Consider the following 964-residue polypeptide: Collagen alpha-1(I) chain (964 aa).

Positions 1–964 (GGISVPGPMG…PGPPGPPGPP (964 aa)) are disordered. 4-hydroxyproline is present on residues P18, P21, P24, P33, P36, P39, P53, P68, P74, P83, and P89. Basic and acidic residues predominate over residues 56–70 (NGDDGEAGKPGRPGE). K92 is subject to 5-hydroxylysine; alternate. O-linked (Gal...) hydroxylysine; alternate glycosylation occurs at K92. S98 carries the phosphoserine modification. 2 stretches are compositionally biased toward low complexity: residues 106 to 117 (DAGPAGPKQMGP) and 126 to 144 (PGASGPAGARGNDGATGAA). Residues P126, P147, P156, P159, P186, P189, P201, P207, P216, P222, P225, and P240 each carry the 4-hydroxyproline modification. The segment covering 146 to 158 (PPGPTGPAGPPGF) has biased composition (pro residues). Positions 192-231 (AGAAGPAGNPGADGQPGAKGANGAPGIAGAPGFPGARGPS) are enriched in low complexity. K243 carries the 5-hydroxylysine modification. 8 positions are modified to 4-hydroxyproline: P249, P252, P260, P269, P284, P290, P299, and P305. Positions 294 to 303 (GERGGPGSRG) are enriched in gly residues. Position 314 is a 5-hydroxylysine (K314). P323, P332, P338, P344, P353, P356, P365, P374, P379, P391, P400, P409, P412, P430, P447, P453, P459, P465, P471, P477, P489, P498, P510, and P519 each carry 4-hydroxyproline. Over residues 347–373 (KGLTGSPGSPGPDGKTGPPGPAGQDGR) the composition is skewed to low complexity. Low complexity predominate over residues 381-400 (ARGQAGVMGFPGPKGAAGEP). Low complexity predominate over residues 459–468 (PGEAGKPGEQ). K531 carries the 5-hydroxylysine modification. A 4-hydroxyproline mark is found at P537, P552, and P558. The span at 564-578 (SGPSGPAGPTGARGA) shows a compositional bias: low complexity. S567 carries the phosphoserine modification. 4-hydroxyproline is present on residues P579, P585, P588, P597, P603, P621, P630, and P639. Residues 591–618 (AGFAGPPGADGQPGAKGEPGDAGAKGDA) show a composition bias toward low complexity. The segment covering 620 to 632 (PPGPAGPTGPPGP) has biased composition (pro residues). Position 642 is a 5-hydroxylysine (K642). Low complexity predominate over residues 647-663 (SAGPPGATGFPGAAGRV). Residues P651 and P657 each carry the 4-hydroxyproline modification. Position 665 is a 3-hydroxyproline (P665). 4-hydroxyproline occurs at positions 666, 675, 678, 704, 712, 721, 739, 748, 751, 757, 772, 778, 784, 792, and 798. Residues 709 to 721 (KGSPGADGPAGAP) show a composition bias toward low complexity. Residues 771-781 (PPGPMGPPGLA) are compositionally biased toward pro residues. K807 carries the 5-hydroxylysine modification. The segment covering 815 to 830 (PGPPGAPGAPGAPGPV) has biased composition (pro residues). P818, P821, and P824 each carry 4-hydroxyproline. Low complexity predominate over residues 850–864 (AGPAGARGPAGPQGP). Residues 865 to 879 (RGDKGETGEQGDRGI) show a composition bias toward basic and acidic residues. K868 carries the post-translational modification 5-hydroxylysine. At K880 the chain carries 5-hydroxylysine; alternate. Residue K880 is glycosylated (O-linked (Gal...) hydroxylysine; alternate). 4 positions are modified to 4-hydroxyproline: P895, P898, P916, and P931. Low complexity predominate over residues 898 to 931 (PGEQGPSGASGPAGPRGPPGSAGSPGKDGLNGLP). At P936 the chain carries 3-hydroxyproline. 4-hydroxyproline is present on P937. Residues 949–964 (VGPPGPPGPPGPPGPP) are compositionally biased toward pro residues. P951 carries the post-translational modification 3-hydroxyproline. Residue P952 is modified to 4-hydroxyproline. 3-hydroxyproline is present on P954. Residue P955 is modified to 4-hydroxyproline. A 3-hydroxyproline modification is found at P957. 4-hydroxyproline is present on residues P958, P961, and P964.

Belongs to the fibrillar collagen family. Trimers of one alpha 2(I) and two alpha 1(I) chains. Post-translationally, contains mostly 4-hydroxyproline. Proline residues at the third position of the tripeptide repeating unit (G-X-Y) are hydroxylated in some or all of the chains. Contains 3-hydroxyproline at a few sites. This modification occurs on the first proline residue in the sequence motif Gly-Pro-Hyp, where Hyp is 4-hydroxyproline. In terms of processing, lysine residues at the third position of the tripeptide repeating unit (G-X-Y) are 5-hydroxylated in some or all of the chains. Post-translationally, O-glycosylated on hydroxylated lysine residues. The O-linked glycan consists of a Glc-Gal disaccharide. In terms of tissue distribution, expressed in bones.

It is found in the secreted. It localises to the extracellular space. The protein localises to the extracellular matrix. Its function is as follows. Type I collagen is a member of group I collagen (fibrillar forming collagen). This Parocnus serus (Greater Haitian ground sloth) protein is Collagen alpha-1(I) chain.